The sequence spans 359 residues: N-acetylhexosamine 1-kinase (359 aa).

Residues Val-21–Arg-359 enclose the Protein kinase domain.

It belongs to the protein kinase superfamily. Mg(2+) serves as cofactor.

The catalysed reaction is N-acetyl-D-hexosamine + ATP = N-acetyl-alpha-D-hexosamine 1-phosphate + ADP + H(+). Its function is as follows. Phosphorylates both N-acetylglucosamine (GlcNAc) and N-acetylgalactosamine (GalNAc) at similar rates. Involved in the lacto-N-biose I/galacto-N-biose (LNB/GNB) degradation pathway, which is important for host intestinal colonization by bifidobacteria. Also accepts GTP and ITP as phosphate donors. In vitro, can phosphorylate several GlcNAc and GalNAc derivatives. The polypeptide is N-acetylhexosamine 1-kinase (nahK) (Bifidobacterium longum subsp. longum (strain ATCC 15707 / DSM 20219 / JCM 1217 / NCTC 11818 / E194b)).